The primary structure comprises 222 residues: MALHIHEACILLLVIPGLVTSAAISHEDYPADEGDQASSNDNLIFDDYRGKGCVDDSGFVYKLGERFFPGHSNCPCVCALDGPVCDQPECPKIHPKCTKVEHNGCCPECKEVKNFCEYHGKNYKILEEFKPSPCEWCRCEPSNEVHCVVADCAVPECVNPIYEPEQCCPVCKNGPNCFAGTTIIPAGIEVKVDDCNICHCHNGDWWKPAQCSKRECQGKQTV.

Positions 1 to 21 (MALHIHEACILLLVIPGLVTS) are cleaved as a signal peptide. 2 consecutive VWFC domains span residues 51–110 (KGCV…PECK) and 114–172 (NFCE…PVCK).

As to quaternary structure, peripherally associated with AMPAR complex. AMPAR complex consists of an inner core made of 4 pore-forming GluA/GRIA proteins (GRIA1, GRIA2, GRIA3 and GRIA4) and 4 major auxiliary subunits arranged in a twofold symmetry. One of the two pairs of distinct binding sites is occupied either by CNIH2, CNIH3 or CACNG2, CACNG3. The other harbors CACNG2, CACNG3, CACNG4, CACNG8 or GSG1L. This inner core of AMPAR complex is complemented by outer core constituents binding directly to the GluA/GRIA proteins at sites distinct from the interaction sites of the inner core constituents. Outer core constituents include at least PRRT1, PRRT2, CKAMP44/SHISA9, FRRS1L and NRN1. The proteins of the inner and outer core serve as a platform for other, more peripherally associated AMPAR constituents, including VWC2L. Alone or in combination, these auxiliary subunits control the gating and pharmacology of the AMPAR complex and profoundly impact their biogenesis and protein processing. As to expression, predominantly expressed in the brain (at protein level). Also detected in bones, including femur and calvaria, heart, lung and kidney. Isoform 5 is predominant in lung and heart, compared to isoforms 1 and 3. Isoform 4 is expressed in femur and calvaria at higher levels than isoforms 1 and 5. Isoforms 1 and 4 are expressed at higher levels than isoform 5 in kidney and brain.

Its subcellular location is the secreted. It is found in the synapse. May play a role in neurogenesis. May promote matrix mineralization, but has been shown to weakly, but significantly inhibit BMP2 and BMP6 activity in a preosteoblastic cell line. The polypeptide is von Willebrand factor C domain-containing protein 2-like (Vwc2l) (Mus musculus (Mouse)).